The primary structure comprises 283 residues: MQTDSLSPSPNPVSPVPLNNPTSAPRYGTVIPNRIFVGGIDFKTNESDLRKFFSQYGSVKEVKIVNDRAGVSKGYGFVTFETQEDAQKILQEAEKLNYKDKKLNIGPAIRKQQVGIPRSSIMPAAGTMYLTTSTGYPYTYHNGVAYFHTPEVTSVPPPWPSRSVCSSPVMVAQPIYQQPAYHYQATTQYLPGQWQWSVPQPSASSAPFLYLQPSEVIYQPVEIAQDGGCVPPPLSLMETSVPEPYSDHGVQATYHQVYAPSAITMPAPVMQPEPIKTVWSIHY.

The tract at residues Met1 to Pro25 is disordered. In terms of domain architecture, RRM spans Asn33–Arg110. A DAZ domain is found at Pro160–Gln184.

This sequence belongs to the RRM DAZ family. In terms of assembly, interacts with DAZ1 and DAZL. In terms of tissue distribution, testis specific. Not expressed in early embryos, primordial germ cells and spermatogonial cells. First expressed in the cytoplasm of spermatocytes and then persists through meiosis.

It is found in the cytoplasm. In terms of biological role, probable RNA-binding protein, which may be required during spermatogenesis. May act by binding to the 3'-UTR of mRNAs and regulating their translation. This is Protein boule-like (BOLL) from Homo sapiens (Human).